Here is a 347-residue protein sequence, read N- to C-terminus: S-adenosylmethionine:tRNA ribosyltransferase-isomerase (347 aa).

This sequence belongs to the QueA family. As to quaternary structure, monomer.

The protein localises to the cytoplasm. It catalyses the reaction 7-aminomethyl-7-carbaguanosine(34) in tRNA + S-adenosyl-L-methionine = epoxyqueuosine(34) in tRNA + adenine + L-methionine + 2 H(+). Its pathway is tRNA modification; tRNA-queuosine biosynthesis. Transfers and isomerizes the ribose moiety from AdoMet to the 7-aminomethyl group of 7-deazaguanine (preQ1-tRNA) to give epoxyqueuosine (oQ-tRNA). The polypeptide is S-adenosylmethionine:tRNA ribosyltransferase-isomerase (Xylella fastidiosa (strain M23)).